Consider the following 316-residue polypeptide: Protoheme IX farnesyltransferase (316 aa).

The next 9 membrane-spanning stretches (helical) occupy residues 28 to 48 (WLAL…AAGM), 57 to 77 (IPIG…AGAI), 106 to 126 (AALV…WLAT), 129 to 149 (LAAD…TMWL), 156 to 176 (NIVI…AATM), 179 to 199 (MAVL…PHFW), 230 to 250 (ILIY…VHEV), 254 to 274 (YTVV…RVLM), and 296 to 316 (YSLV…VLIG).

The protein belongs to the UbiA prenyltransferase family. Protoheme IX farnesyltransferase subfamily.

It localises to the cell inner membrane. It catalyses the reaction heme b + (2E,6E)-farnesyl diphosphate + H2O = Fe(II)-heme o + diphosphate. It functions in the pathway porphyrin-containing compound metabolism; heme O biosynthesis; heme O from protoheme: step 1/1. In terms of biological role, converts heme B (protoheme IX) to heme O by substitution of the vinyl group on carbon 2 of heme B porphyrin ring with a hydroxyethyl farnesyl side group. This chain is Protoheme IX farnesyltransferase, found in Gluconobacter oxydans (strain 621H) (Gluconobacter suboxydans).